Consider the following 535-residue polypeptide: Putative beta-glucosidase 41 (535 aa).

Positions 1–27 are cleaved as a signal peptide; the sequence is MESLMRLVLVLFPFFVVFFVPLDHVSS. A beta-D-glucoside is bound at residue Gln49. Asn118 carries N-linked (GlcNAc...) asparagine glycosylation. Residues His151 and 196-197 each bind a beta-D-glucoside; that span reads NE. Residue Glu197 is the Proton donor of the active site. A disulfide bond links Cys216 and Cys224. A beta-D-glucoside-binding residues include Tyr340 and Glu413. Glu413 acts as the Nucleophile in catalysis. Asn445 carries N-linked (GlcNAc...) asparagine glycosylation. A beta-D-glucoside-binding positions include Trp463, 470 to 471, and Phe479; that span reads EW. Asn489 carries N-linked (GlcNAc...) asparagine glycosylation.

It belongs to the glycosyl hydrolase 1 family.

It catalyses the reaction Hydrolysis of terminal, non-reducing beta-D-glucosyl residues with release of beta-D-glucose.. In Arabidopsis thaliana (Mouse-ear cress), this protein is Putative beta-glucosidase 41.